The primary structure comprises 164 residues: Peroxynitrite isomerase (164 aa).

Residues 21–27 (GRWGGRG) carry the GXWXGXG motif. The heme b site is built by Lys130 and His156.

It belongs to the nitrobindin family. As to quaternary structure, homodimer. It depends on heme b as a cofactor.

It catalyses the reaction peroxynitrite = nitrate. It participates in nitrogen metabolism. Functionally, heme-binding protein able to scavenge peroxynitrite and to protect free L-tyrosine against peroxynitrite-mediated nitration, by acting as a peroxynitrite isomerase that converts peroxynitrite to nitrate. Therefore, this protein likely plays a role in peroxynitrite sensing and in the detoxification of reactive nitrogen and oxygen species (RNS and ROS, respectively). Is able to bind nitric oxide (NO) in vitro, but may act as a sensor of peroxynitrite levels in vivo. This chain is Peroxynitrite isomerase, found in Nocardioides sp. (strain ATCC BAA-499 / JS614).